The following is a 347-amino-acid chain: Ribosomal RNA large subunit methyltransferase M (347 aa).

S-adenosyl-L-methionine-binding positions include serine 184, 217 to 220 (APGG), aspartate 236, aspartate 256, and aspartate 272. Lysine 301 (proton acceptor) is an active-site residue.

The protein belongs to the class I-like SAM-binding methyltransferase superfamily. RNA methyltransferase RlmE family. RlmM subfamily. Monomer.

Its subcellular location is the cytoplasm. It carries out the reaction cytidine(2498) in 23S rRNA + S-adenosyl-L-methionine = 2'-O-methylcytidine(2498) in 23S rRNA + S-adenosyl-L-homocysteine + H(+). Its function is as follows. Catalyzes the 2'-O-methylation at nucleotide C2498 in 23S rRNA. In Xanthomonas oryzae pv. oryzae (strain MAFF 311018), this protein is Ribosomal RNA large subunit methyltransferase M.